The primary structure comprises 110 residues: MLKQKIKTIFEALLYIMLTYWLIDSFFAFNKYDWMLESGGNICSIPSVSGEDRILQAMIAAFFLLTPLIILILRKLFMREMFEFWVYVFSLGICLVCGWWLFWGRFIFCY.

The Cytoplasmic portion of the chain corresponds to 1 to 8; sequence MLKQKIKT. A helical transmembrane segment spans residues 9 to 29; sequence IFEALLYIMLTYWLIDSFFAF. Residues 30–53 are Periplasmic-facing; that stretch reads NKYDWMLESGGNICSIPSVSGEDR. Residues 54–74 traverse the membrane as a helical segment; sequence ILQAMIAAFFLLTPLIILILR. The Cytoplasmic segment spans residues 75-83; the sequence is KLFMREMFE. The helical transmembrane segment at 84–104 threads the bilayer; the sequence is FWVYVFSLGICLVCGWWLFWG. Residues 105-110 lie on the Periplasmic side of the membrane; the sequence is RFIFCY.

It is found in the cell inner membrane. The sequence is that of Inner membrane protein YgiZ (ygiZ) from Escherichia coli (strain K12).